The primary structure comprises 143 residues: MTTSRRKAREIVLQALYEQDLAGHNAEDVLKRLLTENPQTEENVEFIFRLTNAVVKHKDLLDENIRQFASAWPVEQLSYIDRNVLRLAIFEIIHENDVPVKVAINEAVELAKSFGGNSSARFINGVLSSVSKALADTANQREE.

Belongs to the NusB family.

Its function is as follows. Involved in transcription antitermination. Required for transcription of ribosomal RNA (rRNA) genes. Binds specifically to the boxA antiterminator sequence of the ribosomal RNA (rrn) operons. In Dehalococcoides mccartyi (strain CBDB1), this protein is Transcription antitermination protein NusB.